A 203-amino-acid polypeptide reads, in one-letter code: UPF0637 protein EF_3078 (203 aa).

This sequence belongs to the UPF0637 family.

The chain is UPF0637 protein EF_3078 from Enterococcus faecalis (strain ATCC 700802 / V583).